The sequence spans 121 residues: Small ribosomal subunit protein bS6 (121 aa).

The tract at residues 102–121 is disordered; that stretch reads MMRNVEREEARKAQQQEYAA. Basic and acidic residues predominate over residues 105 to 115; the sequence is NVEREEARKAQ.

This sequence belongs to the bacterial ribosomal protein bS6 family.

In terms of biological role, binds together with bS18 to 16S ribosomal RNA. The polypeptide is Small ribosomal subunit protein bS6 (Polaromonas sp. (strain JS666 / ATCC BAA-500)).